Here is a 145-residue protein sequence, read N- to C-terminus: Large ribosomal subunit protein uL13 (145 aa).

The protein belongs to the universal ribosomal protein uL13 family. Part of the 50S ribosomal subunit.

Its function is as follows. This protein is one of the early assembly proteins of the 50S ribosomal subunit, although it is not seen to bind rRNA by itself. It is important during the early stages of 50S assembly. This chain is Large ribosomal subunit protein uL13, found in Staphylococcus haemolyticus (strain JCSC1435).